The sequence spans 843 residues: Protein P (843 aa).

Residues 1–177 (MPLSYQHFRK…FCGSPYSWEQ (177 aa)) form a terminal protein domain (TP) region. The tract at residues 178–346 (ELQHGRLVFQ…YCLSHLINLH (169 aa)) is spacer. 2 disordered regions span residues 218–243 (LKQS…SGSI) and 291–315 (TAQR…AGSQ). Residues 347–690 (EDWGPCIEHG…YLNLYPVARQ (344 aa)) form a polymerase/reverse transcriptase domain (RT) region. The Reverse transcriptase domain occupies 357-600 (EHNIRIPRTP…YSLNFMGYVI (244 aa)). Positions 429, 551, and 552 each coordinate Mg(2+).

It belongs to the hepadnaviridae P protein family.

The catalysed reaction is DNA(n) + a 2'-deoxyribonucleoside 5'-triphosphate = DNA(n+1) + diphosphate. It carries out the reaction Endonucleolytic cleavage to 5'-phosphomonoester.. Activated by host HSP70 and HSP40 in vitro to be able to bind the epsilon loop of the pgRNA. Because deletion of the RNase H region renders the protein partly chaperone-independent, the chaperones may be needed indirectly to relieve occlusion of the RNA-binding site by this domain. Inhibited by several reverse-transcriptase inhibitors: Lamivudine, Adefovir and Entecavir. Multifunctional enzyme that converts the viral RNA genome into dsDNA in viral cytoplasmic capsids. This enzyme displays a DNA polymerase activity that can copy either DNA or RNA templates, and a ribonuclease H (RNase H) activity that cleaves the RNA strand of RNA-DNA heteroduplexes in a partially processive 3'- to 5'-endonucleasic mode. Neo-synthesized pregenomic RNA (pgRNA) are encapsidated together with the P protein, and reverse-transcribed inside the nucleocapsid. Initiation of reverse-transcription occurs first by binding the epsilon loop on the pgRNA genome, and is initiated by protein priming, thereby the 5'-end of (-)DNA is covalently linked to P protein. Partial (+)DNA is synthesized from the (-)DNA template and generates the relaxed circular DNA (RC-DNA) genome. After budding and infection, the RC-DNA migrates in the nucleus, and is converted into a plasmid-like covalently closed circular DNA (cccDNA). The activity of P protein does not seem to be necessary for cccDNA generation, and is presumably released from (+)DNA by host nuclear DNA repair machinery. The sequence is that of Protein P from Hepatitis B virus genotype C subtype ayw (isolate Australia/AustRC/1992) (HBV-C).